A 1407-amino-acid chain; its full sequence is ABC transporter B family member 6 (1407 aa).

The segment at 18-65 (LTPVSEVSEPPESPSPYLDPGAEHGGTGTAAQADDEEEMEEPEEMEPP) is disordered. Residues 50-63 (ADDEEEMEEPEEME) are compositionally biased toward acidic residues. 4 helical membrane-spanning segments follow: residues 84 to 104 (VLMV…IVYL), 139 to 159 (IVYI…CWIL), 212 to 231 (VGNY…IGFV), and 236 to 258 (IALI…NIFL). Positions 86–379 (MVFGSVAAAA…AATNFYSFDQ (294 aa)) constitute an ABC transmembrane type-1 1 domain. Asn291 carries N-linked (GlcNAc...) asparagine glycosylation. 2 helical membrane-spanning segments follow: residues 310–330 (GILI…LAIC) and 351–371 (GEII…NQAA). In terms of domain architecture, ABC transporter 1 spans 412–647 (IEFRNVYFSY…GNLYAELLKC (236 aa)). 447–454 (GRNGSGKS) is an ATP binding site. 2 N-linked (GlcNAc...) asparagine glycosylation sites follow: Asn449 and Asn663. Disordered regions lie at residues 670–696 (AERD…SLQR) and 709–815 (NSEE…DGQH). Residue Asn727 is glycosylated (N-linked (GlcNAc...) asparagine). Residues 733 to 755 (VGEKEPTIKRQDSFEMRLPELPK) show a composition bias toward basic and acidic residues. Over residues 761–770 (PQRQKSNGSD) the composition is skewed to polar residues. Asn767 carries an N-linked (GlcNAc...) asparagine glycan. The region spanning 835–1123 (AVLGSIGAAI…PFGLAPYILK (289 aa)) is the ABC transmembrane type-1 2 domain. Transmembrane regions (helical) follow at residues 840 to 860 (IGAA…ALVV), 880 to 900 (LIIA…HFYF), 958 to 978 (IFIQ…LLGW), 982 to 1002 (LVAL…KLWL), 1061 to 1081 (IGFA…LLLW), and 1102 to 1122 (MVFS…PYIL). An ABC transporter 2 domain is found at 1158-1395 (IELKNIDFCY…NGLYVRLMQP (238 aa)). N-linked (GlcNAc...) asparagine glycosylation is present at Asn1178. 1193–1200 (GVSGSGKS) is a binding site for ATP. N-linked (GlcNAc...) asparagine glycosylation is found at Asn1260 and Asn1346.

This sequence belongs to the ABC transporter superfamily. ABCB family. Multidrug resistance exporter (TC 3.A.1.201) subfamily. In terms of tissue distribution, expressed in aerial tissues.

It localises to the membrane. It catalyses the reaction (indol-3-yl)acetate(in) + ATP + H2O = (indol-3-yl)acetate(out) + ADP + phosphate + H(+). In terms of biological role, probable auxin efflux transporter that contributes, together with ABCB20 and in a FKBP42/TWD1-dependent manner, to the regulation of leaf position and morphology, internode distribution, roots development, and inflorescence organization, probably by modulating auxin repartition. In Arabidopsis thaliana (Mouse-ear cress), this protein is ABC transporter B family member 6.